Here is a 176-residue protein sequence, read N- to C-terminus: L-2,4-diaminobutyric acid acetyltransferase (176 aa).

Residues 16–171 (LSIDAPRVED…THLPEVLYRI (156 aa)) form the N-acetyltransferase domain.

The protein belongs to the acetyltransferase family. EctA subfamily.

It catalyses the reaction L-2,4-diaminobutanoate + acetyl-CoA = (2S)-4-acetamido-2-aminobutanoate + CoA + H(+). It functions in the pathway amine and polyamine biosynthesis; ectoine biosynthesis; L-ectoine from L-aspartate 4-semialdehyde: step 2/3. Functionally, catalyzes the acetylation of L-2,4-diaminobutyrate (DABA) to gamma-N-acetyl-alpha,gamma-diaminobutyric acid (ADABA) with acetyl coenzyme A. In Streptomyces anulatus (Streptomyces chrysomallus), this protein is L-2,4-diaminobutyric acid acetyltransferase (ectA).